Reading from the N-terminus, the 1339-residue chain is Astrotactin-2 (1339 aa).

Positions 1–49 (MAAAGARLSPGPGSGLRGRPRLCFHPGPPPLLPLLLLFLLLLPPPPLLA) are cleaved as a signal peptide. The Lumenal segment spans residues 50–206 (GATAAASREP…IVEEQMHILH (157 aa)). Asn-168 carries N-linked (GlcNAc...) asparagine glycosylation. A helical transmembrane segment spans residues 207-227 (ISVMGGLIALLLLLLVFTVAL). Residues 228 to 434 (YAQRRWQKRR…KGLLKSPVNK (207 aa)) lie on the Cytoplasmic side of the membrane. Disordered regions lie at residues 296 to 316 (EEDE…EFGS) and 363 to 408 (TPIE…ADDE). The helical transmembrane segment at 435–455 (TALTLIAVSSCILAMVCGSQM) threads the bilayer. Residues 456-1339 (SCPLTVKVTL…RNTYGESKGR (884 aa)) are Lumenal-facing. 3 EGF-like domains span residues 510 to 550 (VRDL…HLCV), 651 to 695 (PVRD…SGCY), and 699 to 751 (KGID…KSCL). 9 cysteine pairs are disulfide-bonded: Cys-514–Cys-526, Cys-522–Cys-533, Cys-535–Cys-549, Cys-655–Cys-668, Cys-662–Cys-679, Cys-681–Cys-694, Cys-703–Cys-715, Cys-711–Cys-735, and Cys-737–Cys-750. Asn-770 and Asn-783 each carry an N-linked (GlcNAc...) asparagine glycan. 3 disulfides stabilise this stretch: Cys-825–Cys-987, Cys-916–Cys-977, and Cys-983–Cys-990. N-linked (GlcNAc...) asparagine glycosylation is present at Asn-1020. 5 disulfides stabilise this stretch: Cys-1036–Cys-1047, Cys-1049–Cys-1062, Cys-1136–Cys-1158, Cys-1190–Cys-1277, and Cys-1298–Cys-1321. One can recognise a Fibronectin type-III domain in the interval 1065 to 1188 (LLQPVLRLSP…SELSTVTLRT (124 aa)).

It belongs to the astrotactin family. In terms of assembly, interacts with ASTN1; the interaction is not calcium-dependent.

It localises to the membrane. The protein localises to the perikaryon. The protein resides in the cytoplasm. It is found in the cell cortex. Its subcellular location is the early endosome. It localises to the late endosome. The protein localises to the cytoplasmic vesicle. The protein resides in the clathrin-coated vesicle. Mediates recycling of the neuronal cell adhesion molecule ASTN1 to the anterior pole of the cell membrane in migrating neurons. Promotes ASTN1 internalization and intracellular transport of endocytosed ASTN1. Selectively binds inositol-4,5-bisphosphate, inositol-3,4,5-trisphosphate and inositol-1,3,4,5-tetrakisphosphate, suggesting it is recruited to membranes that contain lipids with a phosphoinositide headgroup. This Homo sapiens (Human) protein is Astrotactin-2 (ASTN2).